The following is an 89-amino-acid chain: Small ribosomal subunit protein uS15 (89 aa).

The protein belongs to the universal ribosomal protein uS15 family. Part of the 30S ribosomal subunit. Forms a bridge to the 50S subunit in the 70S ribosome, contacting the 23S rRNA.

Functionally, one of the primary rRNA binding proteins, it binds directly to 16S rRNA where it helps nucleate assembly of the platform of the 30S subunit by binding and bridging several RNA helices of the 16S rRNA. Its function is as follows. Forms an intersubunit bridge (bridge B4) with the 23S rRNA of the 50S subunit in the ribosome. This is Small ribosomal subunit protein uS15 from Hamiltonella defensa subsp. Acyrthosiphon pisum (strain 5AT).